The following is a 155-amino-acid chain: uncharacterized protein (155 aa).

A run of 5 helical transmembrane segments spans residues 4-24 (IVGA…AGYL), 46-66 (AIGI…AIVY), 77-97 (FWFT…FQFT), 101-121 (LLAA…LLII), and 130-150 (SYLL…SFTI).

Belongs to the TspO/BZRP family.

Its subcellular location is the cell membrane. This is an uncharacterized protein from Bacillus subtilis (strain 168).